The sequence spans 346 residues: Dihydroorotase (346 aa).

Zn(2+) is bound by residues histidine 14 and histidine 16. Substrate is bound by residues 16–18 (HLR) and asparagine 42. Zn(2+) is bound by residues lysine 100, histidine 137, and histidine 175. An N6-carboxylysine modification is found at lysine 100. Histidine 137 provides a ligand contact to substrate. Position 220 (leucine 220) interacts with substrate. Aspartate 248 contributes to the Zn(2+) binding site. Aspartate 248 is a catalytic residue. Substrate-binding residues include histidine 252 and alanine 264.

Belongs to the metallo-dependent hydrolases superfamily. DHOase family. Class II DHOase subfamily. In terms of assembly, homodimer. The cofactor is Zn(2+).

The catalysed reaction is (S)-dihydroorotate + H2O = N-carbamoyl-L-aspartate + H(+). The protein operates within pyrimidine metabolism; UMP biosynthesis via de novo pathway; (S)-dihydroorotate from bicarbonate: step 3/3. Functionally, catalyzes the reversible cyclization of carbamoyl aspartate to dihydroorotate. The chain is Dihydroorotase from Ruegeria pomeroyi (strain ATCC 700808 / DSM 15171 / DSS-3) (Silicibacter pomeroyi).